The sequence spans 513 residues: Probable E3 ubiquitin-protein ligase XBOS34 (513 aa).

ANK repeat units lie at residues 39-69 (EGKT…NVNA), 75-104 (YCGT…NPFI), and 108-137 (DCHT…LFCG). Composition is skewed to polar residues over residues 309–327 (ITTT…NSLN) and 335–355 (SAPS…STYN). Disordered regions lie at residues 309–378 (ITTT…QNST) and 423–455 (SADG…SNSG). Residues 361–378 (GTSSGQSSSKHNKSQNST) are compositionally biased toward low complexity. Residues 436–446 (AENEGDAKPAE) are compositionally biased toward basic and acidic residues. An RING-type zinc finger spans residues 462 to 501 (CVICLDAPVEGACIPCGHMAGCMSCLKDIESKKWGCPICR).

It catalyses the reaction S-ubiquitinyl-[E2 ubiquitin-conjugating enzyme]-L-cysteine + [acceptor protein]-L-lysine = [E2 ubiquitin-conjugating enzyme]-L-cysteine + N(6)-ubiquitinyl-[acceptor protein]-L-lysine.. The protein operates within protein modification; protein ubiquitination. The chain is Probable E3 ubiquitin-protein ligase XBOS34 (XBOS34) from Oryza sativa subsp. japonica (Rice).